The sequence spans 147 residues: Ubiquitin-conjugating enzyme E2-17 kDa (147 aa).

One can recognise a UBC core domain in the interval 1 to 147 (MALKRINKEL…AREWTRKYAM (147 aa)). C85 serves as the catalytic Glycyl thioester intermediate.

The protein belongs to the ubiquitin-conjugating enzyme family.

The catalysed reaction is S-ubiquitinyl-[E1 ubiquitin-activating enzyme]-L-cysteine + [E2 ubiquitin-conjugating enzyme]-L-cysteine = [E1 ubiquitin-activating enzyme]-L-cysteine + S-ubiquitinyl-[E2 ubiquitin-conjugating enzyme]-L-cysteine.. The protein operates within protein modification; protein ubiquitination. In terms of biological role, catalyzes the covalent attachment of ubiquitin to other proteins. Mediates the selective degradation of short-lived and abnormal proteins. Required for proper telomere behavior during cell divisions and possibly for ubiquitination of proteins involved in postmeiotic stages of spermatogenesis. Deletion mutations are lethal in homozygotes. This Drosophila melanogaster (Fruit fly) protein is Ubiquitin-conjugating enzyme E2-17 kDa (eff).